Reading from the N-terminus, the 143-residue chain is Hemoglobin subunit alpha-2 (143 aa).

An N-acetylserine modification is found at serine 2. One can recognise a Globin domain in the interval 2-143 (SLTEKDKAAV…LSLALAEKYR (142 aa)). Position 60 (histidine 60) interacts with O2. A heme b-binding site is contributed by histidine 89.

It belongs to the globin family. As to quaternary structure, hb2 is a heterotetramer of two alpha-2 chains and two beta-1 chains; Hb3 is a heterotetramer of two alpha-2 chains and two beta-2 chains. Red blood cells.

Functionally, involved in oxygen transport from gills to the various peripheral tissues. This is Hemoglobin subunit alpha-2 (hba2) from Anarhichas minor (Arctic spotted wolffish).